We begin with the raw amino-acid sequence, 445 residues long: F-box protein At5g10340 (445 aa).

The F-box domain maps to 64-112; it reads SMEELLPHDVIEYHIMVRLDVKTLLKFKSVSKQWMSTIQSPSFQERQLI.

This is F-box protein At5g10340 from Arabidopsis thaliana (Mouse-ear cress).